A 612-amino-acid polypeptide reads, in one-letter code: Indole-3-acetic acid-amido synthetase GH3.5 (612 aa).

Belongs to the IAA-amido conjugating enzyme family.

Catalyzes the synthesis of indole-3-acetic acid (IAA)-amino acid conjugates, providing a mechanism for the plant to cope with the presence of excess auxin. Strongly reactive with Glu, Gln, Trp, Asp, Ala, Leu, Phe, Gly, Tyr, Met, Ile and Val. Little or no product formation with His, Ser, Thr, Arg, Lys, or Cys. Also active on pyruvic and butyric acid analogs of IAA, PAA and the synthetic auxin naphthaleneacetic acid (NAA). The two chlorinated synthetic auxin herbicides 2,4-D and 3,6-dichloro-o-anisic acid (dicamba) cannot be used as substrates. The protein is Indole-3-acetic acid-amido synthetase GH3.5 (GH3.5) of Arabidopsis thaliana (Mouse-ear cress).